The chain runs to 956 residues: Plasma membrane ATPase 3 (956 aa).

Topologically, residues 1-65 are cytoplasmic; that stretch reads MGEKPEVLDA…EKKESKFSKF (65 aa). A helical transmembrane segment spans residues 66–85; the sequence is LGFMWNPLSWVMEAAAIMAI. Residues 86 to 97 lie on the Extracellular side of the membrane; sequence ALANGGGKPPDW. A helical membrane pass occupies residues 98–118; it reads QDFVGIITLLIINSTISFIEE. Over 119 to 247 the chain is Cytoplasmic; it reads NNAGNAAAAL…GHFQKVLTAI (129 aa). The chain crosses the membrane as a helical span at residues 248–268; the sequence is GNFCICSIAVGMIIEIIVMYP. Residues 269-278 lie on the Extracellular side of the membrane; the sequence is IQHRKYRPGI. Residues 279-300 traverse the membrane as a helical segment; that stretch reads DNLLVLLIGGIPIAMPTVLSVT. Topologically, residues 301–647 are cytoplasmic; sequence MAIGSHRLAQ…TSRAIFQRMK (347 aa). D333 serves as the catalytic 4-aspartylphosphate intermediate. Residues D592 and D596 each coordinate Mg(2+). Residues 648–669 form a helical membrane-spanning segment; it reads NYTIYAVSITIRIVLGFMLLAL. The Extracellular portion of the chain corresponds to 670 to 674; sequence IWQFD. The helical transmembrane segment at 675–697 threads the bilayer; it reads FPPFMVLIIAILNDGTIMTISKD. Residues 698-713 are Cytoplasmic-facing; it reads RVKPSPLPDSWKLAEI. Residues 714-734 traverse the membrane as a helical segment; it reads FTTGVVLGGYLAMMTVIFFWA. Topologically, residues 735–759 are extracellular; it reads AYKTNFFPRVFGVSTLEKTATDDFR. Residues 760–780 form a helical membrane-spanning segment; it reads KLASAIYLQVSTISQALIFVT. At 781–792 the chain is on the cytoplasmic side; the sequence is RSRSWSFMERPG. Residues 793 to 813 form a helical membrane-spanning segment; sequence LLLVVAFFIAQLVATLIAVYA. At 814 to 822 the chain is on the extracellular side; it reads NWSFAAIEG. Residues 823 to 843 form a helical membrane-spanning segment; the sequence is IGWGWAGVIWLYNIVFYIPLD. Topologically, residues 844–956 are cytoplasmic; the sequence is LXXFLIRYAL…IETIQQAYTV (113 aa).

Belongs to the cation transport ATPase (P-type) (TC 3.A.3) family. Type IIIA subfamily. Expressed in roots, stems, leaves from both vegetative and flowering plants, and flowers at early and late stages of development with highest expression levels found in flowers and root tissue.

The protein resides in the cell membrane. It carries out the reaction ATP + H2O + H(+)(in) = ADP + phosphate + 2 H(+)(out). Functionally, the plasma membrane ATPase of plants and fungi is a hydrogen ion pump. The proton gradient it generates drives the active transport of nutrients by H(+)-symport. The resulting external acidification and/or internal alkinization may mediate growth responses. The polypeptide is Plasma membrane ATPase 3 (PMA3) (Nicotiana plumbaginifolia (Leadwort-leaved tobacco)).